The primary structure comprises 549 residues: YTH domain-containing family protein 1 (549 aa).

Disordered regions lie at residues 29-102 (QAPW…QPNM), 139-165 (GHPP…RQSG), 243-262 (GASG…QQAV), 273-298 (DSTE…AKGP), and 425-458 (REDS…SENK). A compositionally biased stretch (polar residues) spans 49-61 (VVGQTQSSPQYNG). Over residues 71 to 102 (QGYYMPQQQQQQQQMPQYYGGPMSPSQPQPNM) the composition is skewed to low complexity. Composition is skewed to polar residues over residues 251 to 260 (TGPSATTPQQ) and 273 to 289 (DSTE…TPTA). One can recognise a YTH domain in the interval 307–513 (DRFFVLKSLT…SVGRRLIGLF (207 aa)).

Belongs to the YTHDF family. YTHDF1 subfamily.

Functionally, specifically recognizes and binds N6-methyladenosine (m6A)-containing mRNAs, and regulates their stability. M6A is a modification present at internal sites of mRNAs and some non-coding RNAs and plays a role in mRNA stability and processing. Directly interacts with the acid phosphatase APHA mRNA to increase its stability. The chain is YTH domain-containing family protein 1 from Cryphonectria parasitica (strain ATCC 38755 / EP155).